Consider the following 274-residue polypeptide: Mitochondrial outer membrane protein porin 1 (274 aa).

The protein belongs to the eukaryotic mitochondrial porin (TC 1.B.8.1) family. Expressed in shoots and roots. Also expressed in callus, leaves, panicles, sheaths and stems.

The protein resides in the mitochondrion outer membrane. Functionally, forms a channel through the mitochondrial outer membrane that allows diffusion of small hydrophilic molecules. The channel adopts an open conformation at low or zero membrane potential and a closed conformation at potentials above 30-40 mV. The open state has a weak anion selectivity whereas the closed state is cation-selective. In Oryza sativa subsp. japonica (Rice), this protein is Mitochondrial outer membrane protein porin 1 (VDAC1).